A 401-amino-acid chain; its full sequence is Argininosuccinate synthase (401 aa).

ATP contacts are provided by residues 7–15 (AYSGGLDTS) and Ala-34. L-citrulline contacts are provided by Tyr-85 and Ser-90. Gly-115 lines the ATP pocket. The L-aspartate site is built by Thr-117, Asn-121, and Asp-122. An L-citrulline-binding site is contributed by Asn-121. Arg-125, Ser-174, Ser-183, Glu-259, and Tyr-271 together coordinate L-citrulline.

The protein belongs to the argininosuccinate synthase family. Type 1 subfamily. In terms of assembly, homotetramer.

It is found in the cytoplasm. The catalysed reaction is L-citrulline + L-aspartate + ATP = 2-(N(omega)-L-arginino)succinate + AMP + diphosphate + H(+). The protein operates within amino-acid biosynthesis; L-arginine biosynthesis; L-arginine from L-ornithine and carbamoyl phosphate: step 2/3. In Desulfitobacterium hafniense (strain DSM 10664 / DCB-2), this protein is Argininosuccinate synthase.